The chain runs to 590 residues: Aspartate--tRNA ligase (590 aa).

E175 is an L-aspartate binding site. An aspartate region spans residues 199–202 (QIFK). An L-aspartate-binding site is contributed by R221. ATP-binding positions include 221-223 (RDE) and Q230. H449 is a binding site for L-aspartate. E483 is a binding site for ATP. R490 serves as a coordination point for L-aspartate. 535-538 (GLDR) contributes to the ATP binding site.

The protein belongs to the class-II aminoacyl-tRNA synthetase family. Type 1 subfamily. In terms of assembly, homodimer.

The protein resides in the cytoplasm. It carries out the reaction tRNA(Asp) + L-aspartate + ATP = L-aspartyl-tRNA(Asp) + AMP + diphosphate. Catalyzes the attachment of L-aspartate to tRNA(Asp) in a two-step reaction: L-aspartate is first activated by ATP to form Asp-AMP and then transferred to the acceptor end of tRNA(Asp). The protein is Aspartate--tRNA ligase of Geobacillus kaustophilus (strain HTA426).